The primary structure comprises 270 residues: Urease accessory protein UreD (270 aa).

Belongs to the UreD family. UreD, UreF and UreG form a complex that acts as a GTP-hydrolysis-dependent molecular chaperone, activating the urease apoprotein by helping to assemble the nickel containing metallocenter of UreC. The UreE protein probably delivers the nickel.

The protein resides in the cytoplasm. Its function is as follows. Required for maturation of urease via the functional incorporation of the urease nickel metallocenter. This is Urease accessory protein UreD from Actinobacillus pleuropneumoniae serotype 3 (strain JL03).